Reading from the N-terminus, the 296-residue chain is 4-hydroxy-tetrahydrodipicolinate synthase (296 aa).

Residue T49 participates in pyruvate binding. The active-site Proton donor/acceptor is the Y137. K166 (schiff-base intermediate with substrate) is an active-site residue. Position 208 (I208) interacts with pyruvate.

The protein belongs to the DapA family. Homotetramer; dimer of dimers.

The protein resides in the cytoplasm. It carries out the reaction L-aspartate 4-semialdehyde + pyruvate = (2S,4S)-4-hydroxy-2,3,4,5-tetrahydrodipicolinate + H2O + H(+). It functions in the pathway amino-acid biosynthesis; L-lysine biosynthesis via DAP pathway; (S)-tetrahydrodipicolinate from L-aspartate: step 3/4. In terms of biological role, catalyzes the condensation of (S)-aspartate-beta-semialdehyde [(S)-ASA] and pyruvate to 4-hydroxy-tetrahydrodipicolinate (HTPA). The protein is 4-hydroxy-tetrahydrodipicolinate synthase of Azobacteroides pseudotrichonymphae genomovar. CFP2.